A 186-amino-acid chain; its full sequence is Small ribosomal subunit protein eS7 (186 aa).

It belongs to the eukaryotic ribosomal protein eS7 family. Component of the small ribosomal subunit. Mature ribosomes consist of a small (40S) and a large (60S) subunit. The 40S subunit contains about 32 different proteins and 1 molecule of RNA (18S). The 60S subunit contains 45 different proteins and 3 molecules of RNA (25S, 5.8S and 5S).

It is found in the cytoplasm. Functionally, component of the ribosome, a large ribonucleoprotein complex responsible for the synthesis of proteins in the cell. The small ribosomal subunit (SSU) binds messenger RNAs (mRNAs) and translates the encoded message by selecting cognate aminoacyl-transfer RNA (tRNA) molecules. The large subunit (LSU) contains the ribosomal catalytic site termed the peptidyl transferase center (PTC), which catalyzes the formation of peptide bonds, thereby polymerizing the amino acids delivered by tRNAs into a polypeptide chain. The nascent polypeptides leave the ribosome through a tunnel in the LSU and interact with protein factors that function in enzymatic processing, targeting, and the membrane insertion of nascent chains at the exit of the ribosomal tunnel. RPS7A is involved in nucleolar processing of pre-18S ribosomal RNA and ribosome assembly. The polypeptide is Small ribosomal subunit protein eS7 (RPS7A) (Candida albicans (strain SC5314 / ATCC MYA-2876) (Yeast)).